The chain runs to 109 residues: Aquaporin-2 (109 aa).

Over 1-6 (SIAFSR) the chain is Cytoplasmic. The chain crosses the membrane as a helical span at residues 7–27 (AVFSEFLATLLFVFFGLGSAL). At 28–35 (NWPQALPS) the chain is on the extracellular side. The helical transmembrane segment at 36-54 (VLQIAMAFGLAIGTLVQAL) threads the bilayer. Over 55–59 (GHISG) the chain is Cytoplasmic. The segment at residues 60–69 (AHINPAVTVA) is an intramembrane region (discontinuously helical). The NPA 1 motif lies at 63–65 (NPA). The Cytoplasmic portion of the chain corresponds to 70–80 (CLVGCHVSFLR). A helical membrane pass occupies residues 81-102 (ATFYLAAQLLGAVAGAAILHEI). Residues 103–109 (TPPDIRG) are Extracellular-facing.

This sequence belongs to the MIP/aquaporin (TC 1.A.8) family. Homotetramer. Post-translationally, serine phosphorylation is necessary and sufficient for expression at the apical membrane. Endocytosis is not phosphorylation-dependent. N-glycosylated.

It localises to the apical cell membrane. It is found in the basolateral cell membrane. Its subcellular location is the cell membrane. The protein localises to the cytoplasmic vesicle membrane. The protein resides in the golgi apparatus. It localises to the trans-Golgi network membrane. The enzyme catalyses H2O(in) = H2O(out). The catalysed reaction is glycerol(in) = glycerol(out). Functionally, forms a water-specific channel that provides the plasma membranes of renal collecting duct with high permeability to water, thereby permitting water to move in the direction of an osmotic gradient. Plays an essential role in renal water homeostasis. Could also be permeable to glycerol. The polypeptide is Aquaporin-2 (Dugong dugon (Dugong)).